The following is a 309-amino-acid chain: Foldase protein PrsA (309 aa).

Residues 1-22 (MKTRSKLAAGFLTLMSVATLAA) form the signal peptide. Residue cysteine 23 is the site of N-palmitoyl cysteine attachment. Cysteine 23 carries S-diacylglycerol cysteine lipidation. Residues 146-241 (TPETSVQVIK…TSYYIIKVTD (96 aa)) form the PpiC domain.

Belongs to the PrsA family.

Its subcellular location is the cell membrane. It carries out the reaction [protein]-peptidylproline (omega=180) = [protein]-peptidylproline (omega=0). Plays a major role in protein secretion by helping the post-translocational extracellular folding of several secreted proteins. This chain is Foldase protein PrsA, found in Streptococcus agalactiae serotype III (strain NEM316).